We begin with the raw amino-acid sequence, 155 residues long: Cytochrome c-type biogenesis protein CcmE (155 aa).

Residues 1-8 (MNPLRKKR) are Cytoplasmic-facing. The chain crosses the membrane as a helical; Signal-anchor for type II membrane protein span at residues 9-29 (LLIIVALLAGVGLAVTLALSA). Residues 30 to 155 (LQENINLFYT…AASPTPVKQG (126 aa)) are Periplasmic-facing. Residues histidine 124 and tyrosine 128 each contribute to the heme site.

This sequence belongs to the CcmE/CycJ family.

Its subcellular location is the cell inner membrane. Heme chaperone required for the biogenesis of c-type cytochromes. Transiently binds heme delivered by CcmC and transfers the heme to apo-cytochromes in a process facilitated by CcmF and CcmH. The protein is Cytochrome c-type biogenesis protein CcmE of Pseudomonas syringae pv. syringae (strain B728a).